The following is a 67-amino-acid chain: DNA gyrase inhibitor YacG (67 aa).

4 residues coordinate Zn(2+): Cys-10, Cys-13, Cys-29, and Cys-33.

The protein belongs to the DNA gyrase inhibitor YacG family. Interacts with GyrB. Zn(2+) is required as a cofactor.

Its function is as follows. Inhibits all the catalytic activities of DNA gyrase by preventing its interaction with DNA. Acts by binding directly to the C-terminal domain of GyrB, which probably disrupts DNA binding by the gyrase. The protein is DNA gyrase inhibitor YacG of Pasteurella multocida (strain Pm70).